A 286-amino-acid polypeptide reads, in one-letter code: Pantothenate synthetase (286 aa).

Methionine 30–histidine 37 lines the ATP pocket. Histidine 37 serves as the catalytic Proton donor. Glutamine 61 provides a ligand contact to (R)-pantoate. Glutamine 61 contributes to the beta-alanine binding site. Glycine 149 to aspartate 152 contacts ATP. Glutamine 155 is a (R)-pantoate binding site. ATP-binding positions include valine 178 and methionine 186 to arginine 189.

This sequence belongs to the pantothenate synthetase family. In terms of assembly, homodimer.

It localises to the cytoplasm. The enzyme catalyses (R)-pantoate + beta-alanine + ATP = (R)-pantothenate + AMP + diphosphate + H(+). It participates in cofactor biosynthesis; (R)-pantothenate biosynthesis; (R)-pantothenate from (R)-pantoate and beta-alanine: step 1/1. Catalyzes the condensation of pantoate with beta-alanine in an ATP-dependent reaction via a pantoyl-adenylate intermediate. The protein is Pantothenate synthetase of Alkalilimnicola ehrlichii (strain ATCC BAA-1101 / DSM 17681 / MLHE-1).